The sequence spans 481 residues: MIKIETVLDILKKDGLFREIIDQGHYHYNYSKVIFDSISYDSRKVTEDTLFFAKGAAFKKEYLLSAITQGLAWYVAEKDYEVGIPVIIVNDIKKAMSLIAMEFYGNPQEKLKLLAFTGTKGKTTAAYFAYNILSQGHRPAMLSTMNTTLDGETFFKSALTTPESIDLFDMMNQAVQNDRTHLIMEVSSQAYLVKRVYGLTFDVGVFLNISPDHIGPIEHPSFEDYFYHKRLLMEKSRAVIINSDMDHFSVLKEQVEDQDHDFYGSQFDNQIENSKAFSFSATGKLAGDYDIQLIGNFNQENAVAAGLACLRLGASLEDIKKGIAATRVPGRMEVLTQKNGAKVFIDYAHNGDSLKKLINVVETHQTGKIALVLGSTGNKGESRRKDFGLLLNQHPEIQVFLTADDPNYEDPMAIADEISSYINHPVEKIADRQEAIKAAMAITNHELDAVIIAGKGADCYQIIQGKKESYPGDTAVAENYL.

Ser-42 contributes to the UDP-N-acetyl-alpha-D-muramoyl-L-alanyl-D-glutamate binding site. 118–124 (GTKGKTT) is a binding site for ATP. UDP-N-acetyl-alpha-D-muramoyl-L-alanyl-D-glutamate contacts are provided by residues 160–161 (TT), Ser-187, and Arg-195. Lys-229 is subject to N6-carboxylysine. An L-lysine recognition motif motif is present at residues 404 to 407 (DDPN).

This sequence belongs to the MurCDEF family. MurE subfamily. Post-translationally, carboxylation is probably crucial for Mg(2+) binding and, consequently, for the gamma-phosphate positioning of ATP.

It is found in the cytoplasm. The catalysed reaction is UDP-N-acetyl-alpha-D-muramoyl-L-alanyl-D-glutamate + L-lysine + ATP = UDP-N-acetyl-alpha-D-muramoyl-L-alanyl-gamma-D-glutamyl-L-lysine + ADP + phosphate + H(+). The protein operates within cell wall biogenesis; peptidoglycan biosynthesis. Its function is as follows. Catalyzes the addition of L-lysine to the nucleotide precursor UDP-N-acetylmuramoyl-L-alanyl-D-glutamate (UMAG) in the biosynthesis of bacterial cell-wall peptidoglycan. This chain is UDP-N-acetylmuramoyl-L-alanyl-D-glutamate--L-lysine ligase (murE), found in Streptococcus pneumoniae serotype 4 (strain ATCC BAA-334 / TIGR4).